A 395-amino-acid chain; its full sequence is Protein maternal effect lethal 26 (395 aa).

An MATH domain is found at Lys-41–Ile-162. One can recognise a BTB domain in the interval Cys-201–Ile-269.

In terms of assembly, interacts (via BTB domain) with cul-3. Seems to be a component of a E3 ubiquitin-protein ligase complex containing cul-3. Interacts (probably via MATH domain) with mei-1, which targets mei-1 for ubiquitin-mediated proteolysis. Interacts (probably via MATH domain) with ppfr-1, the regulatory subunit of the PP4 complex; targets ppfr-1 for ubiquitin-mediated proteolysis. May interact (via MATH domain) with unc-89 (via Ig-like C2-type domain 2/3 and, Ig-like C2-type domain 50 and fibronectin type-III domain 2). Expressed in body wall muscles.

The protein resides in the cytoplasm. The protein localises to the myofibril. It localises to the sarcomere. Its subcellular location is the m line. It is found in the i band. The protein operates within protein modification; protein ubiquitination. In terms of biological role, probable substrate-specific adapter of an E3 ubiquitin-protein ligase complex which mediates the ubiquitination and subsequent proteasomal degradation of target proteins. Controls degradation of microtubule severing protein mei-1 after meiosis. Controls degradation of ppfr-1, the regulatory subunit of PP4 complex, after meiosis. In body wall muscles, involved in the organization of myosin thick filaments, likely by regulating the degradation of mei-1 downstream of unc-89. May also activate the TORC1 pathway. The protein is Protein maternal effect lethal 26 (mel-26) of Caenorhabditis elegans.